Consider the following 226-residue polypeptide: DNA mismatch repair protein MutH (226 aa).

The protein belongs to the MutH family.

Its subcellular location is the cytoplasm. Functionally, sequence-specific endonuclease that cleaves unmethylated GATC sequences. It is involved in DNA mismatch repair. The protein is DNA mismatch repair protein MutH of Vibrio campbellii (strain ATCC BAA-1116).